Consider the following 445-residue polypeptide: Histidine--tRNA ligase (445 aa).

The protein belongs to the class-II aminoacyl-tRNA synthetase family. Homodimer.

It is found in the cytoplasm. It carries out the reaction tRNA(His) + L-histidine + ATP = L-histidyl-tRNA(His) + AMP + diphosphate + H(+). The chain is Histidine--tRNA ligase from Mycoplasma mobile (strain ATCC 43663 / 163K / NCTC 11711) (Mesomycoplasma mobile).